Here is a 421-residue protein sequence, read N- to C-terminus: 3-isopropylmalate dehydratase large subunit (421 aa).

The [4Fe-4S] cluster site is built by Cys-302, Cys-362, and Cys-365.

The protein belongs to the aconitase/IPM isomerase family. LeuC type 2 subfamily. In terms of assembly, heterodimer of LeuC and LeuD. [4Fe-4S] cluster serves as cofactor.

The enzyme catalyses (2R,3S)-3-isopropylmalate = (2S)-2-isopropylmalate. It participates in amino-acid biosynthesis; L-leucine biosynthesis; L-leucine from 3-methyl-2-oxobutanoate: step 2/4. Catalyzes the isomerization between 2-isopropylmalate and 3-isopropylmalate, via the formation of 2-isopropylmaleate. The polypeptide is 3-isopropylmalate dehydratase large subunit (Campylobacter curvus (strain 525.92)).